Reading from the N-terminus, the 358-residue chain is Peptide chain release factor 1 (358 aa).

Residue Gln233 is modified to N5-methylglutamine.

Belongs to the prokaryotic/mitochondrial release factor family. Methylated by PrmC. Methylation increases the termination efficiency of RF1.

It localises to the cytoplasm. Peptide chain release factor 1 directs the termination of translation in response to the peptide chain termination codons UAG and UAA. The chain is Peptide chain release factor 1 from Flavobacterium johnsoniae (strain ATCC 17061 / DSM 2064 / JCM 8514 / BCRC 14874 / CCUG 350202 / NBRC 14942 / NCIMB 11054 / UW101) (Cytophaga johnsonae).